A 392-amino-acid polypeptide reads, in one-letter code: UPF0229 protein CPE1333 (392 aa).

A disordered region spans residues 75-100; sequence VTTGTGEERRGDRISSDKRKAISNNK. The segment covering 80-94 has biased composition (basic and acidic residues); that stretch reads GEERRGDRISSDKRK.

It belongs to the UPF0229 family.

The protein is UPF0229 protein CPE1333 of Clostridium perfringens (strain 13 / Type A).